The chain runs to 315 residues: MRLVFAGTPEPAVVALQKLIDSEHEVVAVLTQPDARRGRGRTLHPSAVAELAQAHGIEVIKPTSLKADTGDGRLVRQRLAELQPDCLPVVAFGQLITRDLLDVAPHGWVNLHFSLLPAWRGAAPVQAAIRAGDQLTGATCFRIDEGLDTGVILSTLEETIQPTDTADDLLTRLAYAGADLLVDTMTGLEAGTISPREQTGEATYAPKITTVDARIDWTVPAEVIDRHIRAHTPGPGAWTMLDDARLKVGPLVTVTDLPDVPTLNPGALHATRDAVYVGTGSTPVALGQIQPPGKKMMNAADWARGVHLDQEASFE.

114–117 contributes to the (6S)-5,6,7,8-tetrahydrofolate binding site; sequence SLLP.

It belongs to the Fmt family.

It catalyses the reaction L-methionyl-tRNA(fMet) + (6R)-10-formyltetrahydrofolate = N-formyl-L-methionyl-tRNA(fMet) + (6S)-5,6,7,8-tetrahydrofolate + H(+). Attaches a formyl group to the free amino group of methionyl-tRNA(fMet). The formyl group appears to play a dual role in the initiator identity of N-formylmethionyl-tRNA by promoting its recognition by IF2 and preventing the misappropriation of this tRNA by the elongation apparatus. The sequence is that of Methionyl-tRNA formyltransferase from Corynebacterium efficiens (strain DSM 44549 / YS-314 / AJ 12310 / JCM 11189 / NBRC 100395).